Consider the following 277-residue polypeptide: Undecaprenyl-diphosphatase (277 aa).

A run of 8 helical transmembrane segments spans residues 19 to 39 (FLPV…PFYG), 44 to 64 (FDDL…LFLY), 89 to 109 (FHFL…GFIA), 122 to 142 (LLEI…VAEW), 154 to 174 (IGFK…IPGM), 195 to 215 (AEFS…YKLI), 224 to 244 (NTIP…TLVI), and 257 to 277 (SVFG…TKLI).

Belongs to the UppP family.

Its subcellular location is the cell inner membrane. The enzyme catalyses di-trans,octa-cis-undecaprenyl diphosphate + H2O = di-trans,octa-cis-undecaprenyl phosphate + phosphate + H(+). In terms of biological role, catalyzes the dephosphorylation of undecaprenyl diphosphate (UPP). Confers resistance to bacitracin. In Leptospira interrogans serogroup Icterohaemorrhagiae serovar copenhageni (strain Fiocruz L1-130), this protein is Undecaprenyl-diphosphatase.